Reading from the N-terminus, the 437-residue chain is Enolase superfamily member DDB_G0284701 (437 aa).

K217 serves as the catalytic Proton acceptor. Positions 251, 279, and 321 each coordinate Mn(2+). D395 functions as the Proton donor in the catalytic mechanism.

It belongs to the mandelate racemase/muconate lactonizing enzyme family.

This Dictyostelium discoideum (Social amoeba) protein is Enolase superfamily member DDB_G0284701.